The following is a 525-amino-acid chain: GMP synthase [glutamine-hydrolyzing] (525 aa).

In terms of domain architecture, Glutamine amidotransferase type-1 spans 3–200 (KILILDFGSQ…VLHVAGCKPS (198 aa)). Catalysis depends on Cys-79, which acts as the Nucleophile. Residues His-174 and Glu-176 contribute to the active site. The region spanning 201-393 (WTMPNYIDEA…LGLPHDMVYR (193 aa)) is the GMPS ATP-PPase domain. 228–234 (SGGVDSS) provides a ligand contact to ATP.

In terms of assembly, homodimer.

It catalyses the reaction XMP + L-glutamine + ATP + H2O = GMP + L-glutamate + AMP + diphosphate + 2 H(+). It participates in purine metabolism; GMP biosynthesis; GMP from XMP (L-Gln route): step 1/1. In terms of biological role, catalyzes the synthesis of GMP from XMP. This chain is GMP synthase [glutamine-hydrolyzing], found in Chromobacterium violaceum (strain ATCC 12472 / DSM 30191 / JCM 1249 / CCUG 213 / NBRC 12614 / NCIMB 9131 / NCTC 9757 / MK).